The chain runs to 203 residues: NADH dehydrogenase [ubiquinone] 1 alpha subcomplex assembly factor 4 (203 aa).

Belongs to the NDUFAF4 family. As to quaternary structure, together with NdufAF3 associates with mitochondrial complex I assembly intermediates during its biogenesis.

Functionally, involved in the assembly of mitochondrial NADH:ubiquinone oxidoreductase complex (complex I). Together with NdufAF3, involved in biogenesis of complex 1 modules N, Q and P-peripheral, but not the P-distal module. Required for recruitment of the complex I assembly factor Timmdc1 to complex 1 assembly intermediates. This is NADH dehydrogenase [ubiquinone] 1 alpha subcomplex assembly factor 4 from Drosophila melanogaster (Fruit fly).